A 122-amino-acid chain; its full sequence is APPPVGDQAGGRKVDCFKYNTTGSEFACSRKWQPVCGTDHRTYSNECMFCMLTQNKRFPVRILQDNKCDIECPQYSDMCTMDYLPLCGSDGKNYSNKCLFCNAVLRSRGALFLAKHGQCQSP.

Kazal-like domains are found at residues 10-70 (GGRK…KCDI) and 71-121 (ECPQ…QCQS). 6 disulfide bridges follow: Cys-16-Cys-50, Cys-28-Cys-47, Cys-36-Cys-68, Cys-72-Cys-101, Cys-79-Cys-98, and Cys-87-Cys-119.

It is found in the secreted. Functionally, this inhibitor is composed of two homologous actively inhibiting halves: one which inhibits trypsin, the other which inhibits elastase. The sequence is that of Double-headed protease inhibitor, submandibular gland from Mustela lutreola (European mink).